Reading from the N-terminus, the 1088-residue chain is Serine/threonine-protein kinase LATS2 (1088 aa).

The segment at 24–49 (EGLKQPSKSSVQGLPAGPNSDTSLDA) is disordered. At S83 the chain carries Phosphoserine; by AURKA. The 42-residue stretch at 98-139 (EVNRQMLQELVNAGCDQEMAGRALKQTGSRSIEAALEYISKM) folds into the UBA domain. The tract at residues 101–141 (RQMLQELVNAGCDQEMAGRALKQTGSRSIEAALEYISKMGY) is interaction with ubiquitinated AMOTL2. Polar residues predominate over residues 271-280 (RSPSFQSKTP). The interval 271–323 (RSPSFQSKTPPETGGYASLPTKGQGGPPGAGLAFPPPAAGLYVPHPHHKQAGP) is disordered. T279 bears the Phosphothreonine mark. S380 is modified (phosphoserine). Disordered stretches follow at residues 383 to 428 (KPGL…SLPA) and 454 to 483 (PQTA…AAEG). The span at 404–413 (SRTNSFNSHQ) shows a compositional bias: polar residues. Positions 466–478 (VPAPAPAPAPAPA) are enriched in pro residues. A PPxY motif motif is present at residues 515 to 518 (PPPY). The interval 543–592 (SLRAGPNEPEGGDKSRKSAKGDKGGKDKKQIQTSPVPVRKNSRDEEKRES) is disordered. Positions 553–572 (GGDKSRKSAKGDKGGKDKKQ) are enriched in basic and acidic residues. A Phosphoserine modification is found at S576. Residues 583–592 (NSRDEEKRES) are compositionally biased toward basic and acidic residues. In terms of domain architecture, Protein kinase spans 668-973 (FVKIKTLGIG…ADDLKAHPFF (306 aa)). Residues 674-682 (LGIGAFGEV) and K697 contribute to the ATP site. D791 acts as the Proton acceptor in catalysis. One can recognise an AGC-kinase C-terminal domain in the interval 974-1052 (SAIDFSSDIR…RRFFDDNGYP (79 aa)). A disordered region spans residues 994–1022 (SHPMDTSNFDPVDEESPWNDASEGSTKAW). At T1041 the chain carries Phosphothreonine. A disordered region spans residues 1056-1088 (PKPSGAEASQAESSDLESSDLVDQTEGCQPVYV).

This sequence belongs to the protein kinase superfamily. AGC Ser/Thr protein kinase family. In terms of assembly, interacts with and is phosphorylated by AURKA. Binds to AR. Interacts with AJUBA during mitosis and this complex regulates organization of the spindle apparatus through recruitment of gamma-tubulin to the centrosome. Interacts (via PPxY motif) with YAP1 (via WW domains). Interacts with MOB1A and MOB1B. Interacts with LIMD1, WTIP and AJUBA. Interacts with SNAI1. Interacts with WWC1, WWC2 and WWC3 (via their WW domains). Interacts (via UBA domain) with ubiquitinated AMOTL2; the interaction promotes LATS2 phosphorylation of YAP1. Mg(2+) is required as a cofactor. In terms of processing, autophosphorylated and phosphorylated during M-phase and the G1/S-phase of the cell cycle. Phosphorylated and activated by STK3/MST2. Phosphorylated by MAP4Ks; in parallel to STK3/MST2 and resulting to its activation. Phosphorylation by NUAK2 may regulate its activity in phosphorylation and inactivation YAP1. In terms of tissue distribution, expressed at high levels in heart and skeletal muscle and at lower levels in all other tissues examined.

It is found in the cytoplasm. Its subcellular location is the cytoskeleton. The protein localises to the microtubule organizing center. It localises to the centrosome. The protein resides in the spindle pole. It is found in the nucleus. It catalyses the reaction L-seryl-[protein] + ATP = O-phospho-L-seryl-[protein] + ADP + H(+). It carries out the reaction L-threonyl-[protein] + ATP = O-phospho-L-threonyl-[protein] + ADP + H(+). In terms of biological role, negative regulator of YAP1 in the Hippo signaling pathway that plays a pivotal role in organ size control and tumor suppression by restricting proliferation and promoting apoptosis. The core of this pathway is composed of a kinase cascade wherein STK3/MST2 and STK4/MST1, in complex with its regulatory protein SAV1, phosphorylates and activates LATS1/2 in complex with its regulatory protein MOB1, which in turn phosphorylates and inactivates YAP1 oncoprotein and WWTR1/TAZ. Phosphorylation of YAP1 by LATS2 inhibits its translocation into the nucleus to regulate cellular genes important for cell proliferation, cell death, and cell migration. Also phosphorylates YAP1 in response to cell contact inhibition-driven WWP1 ubiquitination of AMOTL2, which results in LATS2 activation. Acts as a tumor suppressor which plays a critical role in centrosome duplication, maintenance of mitotic fidelity and genomic stability. Negatively regulates G1/S transition by down-regulating cyclin E/CDK2 kinase activity. Negative regulator of the androgen receptor. Phosphorylates SNAI1 in the nucleus leading to its nuclear retention and stabilization, which enhances its epithelial-mesenchymal transition and tumor cell invasion/migration activities. This tumor-promoting activity is independent of its effects upon YAP1 or WWTR1/TAZ. Acts as an activator of the NLRP3 inflammasome by mediating phosphorylation of 'Ser-265' of NLRP3 following NLRP3 palmitoylation, promoting NLRP3 activation by NEK7. The sequence is that of Serine/threonine-protein kinase LATS2 from Homo sapiens (Human).